Consider the following 210-residue polypeptide: Large ribosomal subunit protein uL3 (210 aa).

The interval 125 to 151 (RHGQSRGPMSHGSRYHRRPGSMGPVAP) is disordered.

The protein belongs to the universal ribosomal protein uL3 family. In terms of assembly, part of the 50S ribosomal subunit. Forms a cluster with proteins L14 and L19.

Its function is as follows. One of the primary rRNA binding proteins, it binds directly near the 3'-end of the 23S rRNA, where it nucleates assembly of the 50S subunit. The sequence is that of Large ribosomal subunit protein uL3 from Bacillus cereus (strain Q1).